The following is a 371-amino-acid chain: Glutamate 5-kinase (371 aa).

ATP is bound at residue K8. Substrate-binding residues include S49, D136, and N149. ATP is bound by residues 169 to 170 and 213 to 219; these read TD and TGGMATK. Residues 278–356 form the PUA domain; sequence TGKLILDDGA…EDIPQVLGYA (79 aa).

It belongs to the glutamate 5-kinase family.

The protein localises to the cytoplasm. The catalysed reaction is L-glutamate + ATP = L-glutamyl 5-phosphate + ADP. Its pathway is amino-acid biosynthesis; L-proline biosynthesis; L-glutamate 5-semialdehyde from L-glutamate: step 1/2. Catalyzes the transfer of a phosphate group to glutamate to form L-glutamate 5-phosphate. In Acaryochloris marina (strain MBIC 11017), this protein is Glutamate 5-kinase.